A 556-amino-acid chain; its full sequence is Formate--tetrahydrofolate ligase (556 aa).

65–72 (TPAGEGKS) contacts ATP.

The protein belongs to the formate--tetrahydrofolate ligase family.

The catalysed reaction is (6S)-5,6,7,8-tetrahydrofolate + formate + ATP = (6R)-10-formyltetrahydrofolate + ADP + phosphate. Its pathway is one-carbon metabolism; tetrahydrofolate interconversion. The protein is Formate--tetrahydrofolate ligase of Streptococcus pneumoniae serotype 19F (strain G54).